A 30-amino-acid polypeptide reads, in one-letter code: XXXGLXIVDAFVQPNLILQGDAKVEDNGXL.

The protein belongs to the leguminous lectin family.

In terms of biological role, lectin and alpha-amylase inhibitor. Acts as a defensive protein against insects. This is Putative alpha-amylase inhibitor from Phaseolus vulgaris (Kidney bean).